Consider the following 558-residue polypeptide: DNA ligase B (558 aa).

Lysine 126 functions as the N6-AMP-lysine intermediate in the catalytic mechanism.

Belongs to the NAD-dependent DNA ligase family. LigB subfamily.

The catalysed reaction is NAD(+) + (deoxyribonucleotide)n-3'-hydroxyl + 5'-phospho-(deoxyribonucleotide)m = (deoxyribonucleotide)n+m + AMP + beta-nicotinamide D-nucleotide.. Functionally, catalyzes the formation of phosphodiester linkages between 5'-phosphoryl and 3'-hydroxyl groups in double-stranded DNA using NAD as a coenzyme and as the energy source for the reaction. In Pseudomonas fluorescens (strain Pf0-1), this protein is DNA ligase B.